The sequence spans 128 residues: Group 2 truncated hemoglobin GlbO (128 aa).

Positions 23-36 form a cross-link, isodityrosine (Tyr-Tyr); it reads YAQVAEDEVLRRVY. Tyr-36 carries the post-translational modification 3',4'-dihydroxyphenylalanine. His-75 serves as a coordination point for heme.

It belongs to the truncated hemoglobin family. Group II subfamily. Homododecamer. Heme serves as cofactor. Post-translationally, contains L-DOPA (3',4'-dihydroxyphenylalanine).

The protein is Group 2 truncated hemoglobin GlbO (glbO) of Mycobacterium bovis (strain ATCC BAA-935 / AF2122/97).